The chain runs to 160 residues: RNA-binding protein 3 (160 aa).

Residues 6 to 84 form the RRM domain; that stretch reads GKLFVGGLNF…RQIRVDHAGK (79 aa). An Omega-N-methylarginine modification is found at Arg-47. The disordered stretch occupies residues 81-116; it reads HAGKSARGSRGGAFGSYERGRGYPRGGGDQGYGSGR. Residues 103–114 show a composition bias toward gly residues; it reads YPRGGGDQGYGS. Arg-105 is subject to Asymmetric dimethylarginine; alternate. At Arg-105 the chain carries Dimethylated arginine; alternate. At Arg-105 the chain carries Omega-N-methylarginine; alternate. Residues Arg-120 and Arg-134 each carry the omega-N-methylarginine modification. The disordered stretch occupies residues 135-160; the sequence is SRDYGGRSQGGYDRYSGGNYRDNYDN. The residue at position 150 (Ser-150) is a Phosphoserine. Tyr-158 carries the phosphotyrosine modification.

In terms of assembly, interacts with RPL4. Associates with the 60S ribosomal subunits.

The protein localises to the nucleus. It localises to the cytoplasm. It is found in the cell projection. Its subcellular location is the dendrite. Its function is as follows. Cold-inducible mRNA binding protein that enhances global protein synthesis at both physiological and mild hypothermic temperatures. Reduces the relative abundance of microRNAs, when overexpressed. Enhances phosphorylation of translation initiation factors and active polysome formation. The protein is RNA-binding protein 3 of Capra hircus (Goat).